The primary structure comprises 220 residues: Type-4 uracil-DNA glycosylase (220 aa).

Residues Cys14 and Cys17 each coordinate [4Fe-4S] cluster. Uracil is bound by residues Gly41–Ala43, Phe55, and Asn82. Positions 86 and 102 each coordinate [4Fe-4S] cluster. Residue His164 participates in uracil binding.

This sequence belongs to the uracil-DNA glycosylase (UDG) superfamily. Type 4 (UDGa) family.

The catalysed reaction is Hydrolyzes single-stranded DNA or mismatched double-stranded DNA and polynucleotides, releasing free uracil.. Functionally, removes uracil bases that are present in DNA as a result of either deamination of cytosine or misincorporation of dUMP instead of dTMP. The chain is Type-4 uracil-DNA glycosylase from Sulfurisphaera tokodaii (strain DSM 16993 / JCM 10545 / NBRC 100140 / 7) (Sulfolobus tokodaii).